Here is a 136-residue protein sequence, read N- to C-terminus: Calmodulin-A (136 aa).

EF-hand domains follow at residues 1-36, 37-72, 74-109, and 110-136; these read EQIA…LGQN, PTEA…KMKD, DSEE…LGEK, and LTDE…EEFV. The Ca(2+) site is built by Asp-14, Asp-16, Asp-18, Thr-20, Glu-25, Asp-50, Asp-52, Asn-54, Thr-56, Glu-61, Asp-87, Asp-89, Asn-91, Tyr-93, and Glu-98. At Lys-109 the chain carries N6,N6,N6-trimethyllysine. Ca(2+) contacts are provided by Asp-123, Asp-125, Asp-127, Gln-129, and Glu-134.

This sequence belongs to the calmodulin family.

In terms of biological role, calmodulin acts as part of a calcium signal transduction pathway by mediating the control of a large number of enzymes, ion channels, aquaporins and other proteins through calcium-binding. Calcium-binding is required for the activation of calmodulin. Among the enzymes to be stimulated by the calmodulin-calcium complex are a number of protein kinases, such as myosin light-chain kinases and calmodulin-dependent protein kinase type II (CaMK2), and phosphatases. In Oryzias latipes (Japanese rice fish), this protein is Calmodulin-A (calm1).